Reading from the N-terminus, the 471-residue chain is MNYTGKKILVLGMGKTGISMVKWLSRLGAQLSVADTRTSPPNLELISRIVPGEAIFCGPLKEELFQGIDAIAISPGVAVAEPLVQAALQQGVPVIGDIELFAVALDQYAPPGTKILAITGSNGKTTVTSMVGEMVKNAGWDVEVAGNIGPAALDALMQRMDANKWPHLWALELSSFQLETTSSLRPDAATVLNLSEDHLDRYDSIEEYAAAKARIFSRPHNNGCVQILNRDDARVYAMADKNSKQVTFGLSAPVSDEEFGLLPGGSDVWLAQGSTHLLKTSELAVAGLHNAANALAALALCRAVDLPFEPLLHALRTFRGLPHRMQKVAEFNGVTFYDDSKSTNIGSAVAALNGFRKNVILIAGGDGKGQDFSPLEQPVSKHVRSVVLLGRDADKVAQAIQASNVPIHRVTTMDEAVQVSFLLAEHGDVVLLSPACASLDMFNNYIHRAEVFTAAVRLIERKFVLTAQTCH.

An ATP-binding site is contributed by 120–126; it reads GSNGKTT.

It belongs to the MurCDEF family.

Its subcellular location is the cytoplasm. It catalyses the reaction UDP-N-acetyl-alpha-D-muramoyl-L-alanine + D-glutamate + ATP = UDP-N-acetyl-alpha-D-muramoyl-L-alanyl-D-glutamate + ADP + phosphate + H(+). Its pathway is cell wall biogenesis; peptidoglycan biosynthesis. In terms of biological role, cell wall formation. Catalyzes the addition of glutamate to the nucleotide precursor UDP-N-acetylmuramoyl-L-alanine (UMA). In Nitrosomonas europaea (strain ATCC 19718 / CIP 103999 / KCTC 2705 / NBRC 14298), this protein is UDP-N-acetylmuramoylalanine--D-glutamate ligase.